The following is a 96-amino-acid chain: Antitoxin ParD4 (96 aa).

Belongs to the ParD antitoxin family.

In terms of biological role, antitoxin component of a type II toxin-antitoxin (TA) system. Neutralizes the effect of cognate toxin ParE4, but no other RelE or ParE toxin. The sequence is that of Antitoxin ParD4 (parD4) from Caulobacter vibrioides (strain ATCC 19089 / CIP 103742 / CB 15) (Caulobacter crescentus).